A 124-amino-acid chain; its full sequence is Small ribosomal subunit protein uS12 (124 aa).

The segment at 1–32 is disordered; the sequence is MPTIQQLVRKGRQAKASKTKTPALKGSPQRRG. The segment covering 9-18 has biased composition (basic residues); that stretch reads RKGRQAKASK. Asp-89 carries the post-translational modification 3-methylthioaspartic acid.

It belongs to the universal ribosomal protein uS12 family. Part of the 30S ribosomal subunit. Contacts proteins S8 and S17. May interact with IF1 in the 30S initiation complex.

With S4 and S5 plays an important role in translational accuracy. Functionally, interacts with and stabilizes bases of the 16S rRNA that are involved in tRNA selection in the A site and with the mRNA backbone. Located at the interface of the 30S and 50S subunits, it traverses the body of the 30S subunit contacting proteins on the other side and probably holding the rRNA structure together. The combined cluster of proteins S8, S12 and S17 appears to hold together the shoulder and platform of the 30S subunit. This Acidothermus cellulolyticus (strain ATCC 43068 / DSM 8971 / 11B) protein is Small ribosomal subunit protein uS12.